Consider the following 993-residue polypeptide: DNA-binding protein SMUBP-2 (993 aa).

Position 2 is an N-acetylalanine (A2). ATP contacts are provided by residues 214–221 (GPPGTGKT), Q403, Y442, and E571. The interval 638-785 (TAFEYLDDIV…KRRFITVSKR (148 aa)) is SS DNA-binding. Disordered regions lie at residues 651 to 723 (YSHE…VESQ), 782 to 828 (VSKR…PDQP), and 841 to 879 (VRSA…DLPT). Polar residues-rich tracts occupy residues 653 to 662 (HENSQGSSHA) and 669 to 681 (PATS…QRQE). Positions 723–786 (QDGVDHFRAM…RRFITVSKRA (64 aa)) constitute an R3H domain. The segment covering 818-828 (PPREQRGPDQP) has biased composition (basic and acidic residues). Positions 842 to 859 (RSAQGQPASKEQQASGQQ) are enriched in polar residues. The short motif at 864 to 868 (KKKKK) is the Nuclear localization signal element. The segment at 891-940 (VKADNTCGFAKCTAGVTTLGQFCQLCSRRYCLSHHLPEIHGCGERARAHA) adopts an AN1-type zinc-finger fold. Zn(2+) contacts are provided by C897, C902, C913, C916, C921, H924, H930, and C932. The interval 971-993 (RRLDKKLSELSNQRTSRRKERGT) is disordered.

This sequence belongs to the DNA2/NAM7 helicase family. Homooligomer. Interacts with RUVBL1. Interacts with RUVBL2. Interacts with GTF3C1. Interacts with ABT1. Interacts with ribosomes. Expressed in all tissues examined. Expressed in the developing and adult human brain, with highest expression in the cerebellum. Moderately expressed in fibroblasts.

It localises to the nucleus. The protein resides in the cytoplasm. Its subcellular location is the cell projection. The protein localises to the axon. It catalyses the reaction ATP + H2O = ADP + phosphate + H(+). 5' to 3' helicase that unwinds RNA and DNA duplexes in an ATP-dependent reaction. Specific to 5'-phosphorylated single-stranded guanine-rich sequences. May play a role in RNA metabolism, ribosome biogenesis or initiation of translation. May play a role in regulation of transcription. Interacts with tRNA-Tyr. The sequence is that of DNA-binding protein SMUBP-2 (IGHMBP2) from Homo sapiens (Human).